The sequence spans 249 residues: 3-deoxy-D-manno-octulosonic acid kinase (249 aa).

The active site involves D175.

The protein belongs to the protein kinase superfamily. KdkA/RfaP family.

It is found in the cell inner membrane. The catalysed reaction is an alpha-Kdo-(2-&gt;6)-lipid IVA + ATP = a 4-O-phospho-alpha-Kdo-(2-&gt;6)-lipid IVA + ADP + H(+). It functions in the pathway bacterial outer membrane biogenesis; LPS core biosynthesis. In terms of biological role, catalyzes the ATP-dependent phosphorylation of the 3-deoxy-D-manno-octulosonic acid (Kdo) residue in Kdo-lipid IV(A) at the 4-OH position. This is 3-deoxy-D-manno-octulosonic acid kinase from Xylella fastidiosa (strain M23).